A 184-amino-acid polypeptide reads, in one-letter code: ATP synthase subunit b, chloroplastic (184 aa).

Residues 27-49 form a helical membrane-spanning segment; sequence LATNPINLSVVLGVLIFFGKGVL.

The protein belongs to the ATPase B chain family. In terms of assembly, F-type ATPases have 2 components, F(1) - the catalytic core - and F(0) - the membrane proton channel. F(1) has five subunits: alpha(3), beta(3), gamma(1), delta(1), epsilon(1). F(0) has four main subunits: a(1), b(1), b'(1) and c(10-14). The alpha and beta chains form an alternating ring which encloses part of the gamma chain. F(1) is attached to F(0) by a central stalk formed by the gamma and epsilon chains, while a peripheral stalk is formed by the delta, b and b' chains.

The protein localises to the plastid. Its subcellular location is the chloroplast thylakoid membrane. In terms of biological role, f(1)F(0) ATP synthase produces ATP from ADP in the presence of a proton or sodium gradient. F-type ATPases consist of two structural domains, F(1) containing the extramembraneous catalytic core and F(0) containing the membrane proton channel, linked together by a central stalk and a peripheral stalk. During catalysis, ATP synthesis in the catalytic domain of F(1) is coupled via a rotary mechanism of the central stalk subunits to proton translocation. Its function is as follows. Component of the F(0) channel, it forms part of the peripheral stalk, linking F(1) to F(0). This chain is ATP synthase subunit b, chloroplastic, found in Cucumis sativus (Cucumber).